The primary structure comprises 412 residues: Phytoene synthase 1, chloroplastic (412 aa).

A chloroplast-targeting transit peptide spans 1-129 (MSVALLWVVS…AYDRCGEVCA (129 aa)).

This sequence belongs to the phytoene/squalene synthase family. Monomer. Interacts with SGR1.

Its subcellular location is the plastid. It localises to the chloroplast. It catalyses the reaction 2 (2E,6E,10E)-geranylgeranyl diphosphate = 15-cis-phytoene + 2 diphosphate. It participates in carotenoid biosynthesis; phytoene biosynthesis; all-trans-phytoene from geranylgeranyl diphosphate: step 1/1. Catalyzes the reaction from prephytoene diphosphate to phytoene. The polypeptide is Phytoene synthase 1, chloroplastic (PSY1) (Solanum lycopersicum (Tomato)).